Consider the following 100-residue polypeptide: Aspartyl/glutamyl-tRNA(Asn/Gln) amidotransferase subunit C (100 aa).

Belongs to the GatC family. In terms of assembly, heterotrimer of A, B and C subunits.

The catalysed reaction is L-glutamyl-tRNA(Gln) + L-glutamine + ATP + H2O = L-glutaminyl-tRNA(Gln) + L-glutamate + ADP + phosphate + H(+). It carries out the reaction L-aspartyl-tRNA(Asn) + L-glutamine + ATP + H2O = L-asparaginyl-tRNA(Asn) + L-glutamate + ADP + phosphate + 2 H(+). In terms of biological role, allows the formation of correctly charged Asn-tRNA(Asn) or Gln-tRNA(Gln) through the transamidation of misacylated Asp-tRNA(Asn) or Glu-tRNA(Gln) in organisms which lack either or both of asparaginyl-tRNA or glutaminyl-tRNA synthetases. The reaction takes place in the presence of glutamine and ATP through an activated phospho-Asp-tRNA(Asn) or phospho-Glu-tRNA(Gln). The polypeptide is Aspartyl/glutamyl-tRNA(Asn/Gln) amidotransferase subunit C (Rickettsia africae (strain ESF-5)).